The sequence spans 38 residues: Large ribosomal subunit protein bL36 (38 aa).

Belongs to the bacterial ribosomal protein bL36 family.

The chain is Large ribosomal subunit protein bL36 from Gemmatimonas aurantiaca (strain DSM 14586 / JCM 11422 / NBRC 100505 / T-27).